We begin with the raw amino-acid sequence, 339 residues long: MEANFSIPQNGSEVVFYDSTTSRVICIFLVVVLSITFLLGVIGNGLVIYVAGFRMTHTVTTICYLNLALSDFSYMASLPFQITSIVMNGEWLFGWFLCKFVHMIINVNLFLSIFLITFIAMDRCICVLHPVWAQNHRTVNVATKVIFGAWILVLMLIFPHCIFVTTVKDESGKVHCICNFESWAATPEEQVKVSMTVSLISVTISFIIGFSIPMIFIVICYGLMAAKIGRRGFVNSSRPLRVLTAVAISFFVCWFPFQLIFLLGNIGNKETQNNIDTWVNTASTLASFNSCLNPILYVFLGQQFRERLIYSLSASLERALREDSALNSDKTRNLSSQRL.

At 1 to 23 (MEANFSIPQNGSEVVFYDSTTSR) the chain is on the extracellular side. 2 N-linked (GlcNAc...) asparagine glycosylation sites follow: Asn4 and Asn10. A helical transmembrane segment spans residues 24 to 44 (VICIFLVVVLSITFLLGVIGN). The Cytoplasmic segment spans residues 45–62 (GLVIYVAGFRMTHTVTTI). Residues 63-85 (CYLNLALSDFSYMASLPFQITSI) form a helical membrane-spanning segment. The Extracellular portion of the chain corresponds to 86–99 (VMNGEWLFGWFLCK). Residues Cys98 and Cys178 are joined by a disulfide bond. A helical transmembrane segment spans residues 100-120 (FVHMIINVNLFLSIFLITFIA). Over 121–144 (MDRCICVLHPVWAQNHRTVNVATK) the chain is Cytoplasmic. A helical transmembrane segment spans residues 145–165 (VIFGAWILVLMLIFPHCIFVT). The Extracellular portion of the chain corresponds to 166–198 (TVKDESGKVHCICNFESWAATPEEQVKVSMTVS). Residues 199 to 219 (LISVTISFIIGFSIPMIFIVI) traverse the membrane as a helical segment. At 220-241 (CYGLMAAKIGRRGFVNSSRPLR) the chain is on the cytoplasmic side. A helical membrane pass occupies residues 242–262 (VLTAVAISFFVCWFPFQLIFL). Over 263 to 280 (LGNIGNKETQNNIDTWVN) the chain is Extracellular. A helical transmembrane segment spans residues 281 to 301 (TASTLASFNSCLNPILYVFLG). Topologically, residues 302 to 339 (QQFRERLIYSLSASLERALREDSALNSDKTRNLSSQRL) are cytoplasmic.

This sequence belongs to the G-protein coupled receptor 1 family. As to expression, expressed exclusively in vomeronasal tissue. Expressed in 1.2 % of a subset of sensory neurons located in the apical layer of the vomeronasal organ. Each neuron appears to express only one receptor gene. Expressed in brain, spleen, skeletal muscle and at high level in testis.

It localises to the membrane. In terms of biological role, may have an olfactory function associated with the identification of pathogens or of pathogenic states. This chain is Formyl peptide receptor-related sequence 6 (Fpr-rs6), found in Mus musculus (Mouse).